The chain runs to 508 residues: Phytepsin (508 aa).

Positions 1–27 (MGTRGLALALLAAVLLLQTVLPAASEA) are cleaved as a signal peptide. A propeptide spans 28–66 (EGLVRIALKKRPIDRNSRVATGLSGGEEQPLLSGANPLR) (activation peptide). Positions 84–505 (YFGEIGVGTP…DYGKLRIGFA (422 aa)) constitute a Peptidase A1 domain. Aspartate 102 is an active-site residue. 2 disulfide bridges follow: cysteine 115–cysteine 121 and cysteine 280–cysteine 284. Residue aspartate 289 is part of the active site. In terms of domain architecture, Saposin B-type spans 314–419 (VVSQECKTIV…NQLCNRLPSP (106 aa)). 4 disulfides stabilise this stretch: cysteine 319–cysteine 413, cysteine 344–cysteine 385, cysteine 350–cysteine 382, and cysteine 427–cysteine 464. N-linked (GlcNAc...) asparagine glycosylation is present at asparagine 399.

The protein belongs to the peptidase A1 family. As to quaternary structure, heterodimer of two subunits (29 kDa and 11 kDa) processed from the precursor molecule. A large enzyme (32 kDa and 16 kDa) is an intermediate precursor form. In terms of tissue distribution, embryo and leaf.

The protein resides in the vacuole. It carries out the reaction Prefers hydrophobic residues Phe, Val, Ile, Leu, and Ala at P1 and P1', but also cleaves -Phe-|-Asp- and -Asp-|-Asp- bonds in 2S albumin from plant seeds.. Involved in the breakdown of propeptides of storage proteins in protein-storage vacuoles. This is Phytepsin from Hordeum vulgare (Barley).